The following is a 666-amino-acid chain: DNA ligase (666 aa).

NAD(+) is bound by residues 34–38, 83–84, and Glu-114; these read DAEYD and SL. Lys-116 serves as the catalytic N6-AMP-lysine intermediate. NAD(+) is bound by residues Arg-137, Glu-171, Lys-286, and Lys-310. Zn(2+) contacts are provided by Cys-404, Cys-407, Cys-422, and Cys-427. A BRCT domain is found at 588–666; sequence NTESTISEKS…EEFFAILKGE (79 aa).

Belongs to the NAD-dependent DNA ligase family. LigA subfamily. The cofactor is Mg(2+). Mn(2+) is required as a cofactor.

It carries out the reaction NAD(+) + (deoxyribonucleotide)n-3'-hydroxyl + 5'-phospho-(deoxyribonucleotide)m = (deoxyribonucleotide)n+m + AMP + beta-nicotinamide D-nucleotide.. DNA ligase that catalyzes the formation of phosphodiester linkages between 5'-phosphoryl and 3'-hydroxyl groups in double-stranded DNA using NAD as a coenzyme and as the energy source for the reaction. It is essential for DNA replication and repair of damaged DNA. The sequence is that of DNA ligase from Mesoplasma florum (strain ATCC 33453 / NBRC 100688 / NCTC 11704 / L1) (Acholeplasma florum).